Here is a 203-residue protein sequence, read N- to C-terminus: Protein GrpE (203 aa).

It belongs to the GrpE family. Homodimer.

Its subcellular location is the cytoplasm. Its function is as follows. Participates actively in the response to hyperosmotic and heat shock by preventing the aggregation of stress-denatured proteins, in association with DnaK and GrpE. It is the nucleotide exchange factor for DnaK and may function as a thermosensor. Unfolded proteins bind initially to DnaJ; upon interaction with the DnaJ-bound protein, DnaK hydrolyzes its bound ATP, resulting in the formation of a stable complex. GrpE releases ADP from DnaK; ATP binding to DnaK triggers the release of the substrate protein, thus completing the reaction cycle. Several rounds of ATP-dependent interactions between DnaJ, DnaK and GrpE are required for fully efficient folding. This Pseudoalteromonas translucida (strain TAC 125) protein is Protein GrpE.